The chain runs to 225 residues: DnaA regulatory inactivator Hda (225 aa).

The protein belongs to the DnaA family. HdA subfamily. As to quaternary structure, the active form seems to be an ADP-bound monomer. Forms the RIDA complex (regulatory inactivation of DnaA) of ATP-DnaA, ADP-Hda and the DNA-loaded beta sliding clamp (dnaN).

Mediates the interaction of DNA replication initiator protein DnaA with DNA polymerase subunit beta sliding clamp (dnaN). Stimulates hydrolysis of ATP-DnaA to ADP-DnaA, rendering DnaA inactive for reinitiation, a process called regulatory inhibition of DnaA or RIDA. In Klebsiella pneumoniae (strain 342), this protein is DnaA regulatory inactivator Hda.